We begin with the raw amino-acid sequence, 142 residues long: DNA-directed RNA polymerases I, II, and III subunit rpabc3 (142 aa).

Residues 16 to 40 are non-specific ssDNA binding; the sequence is DPDGKKFDRVSRFVCYSENYEMDLQ.

This sequence belongs to the eukaryotic RPB8 RNA polymerase subunit family. Component of the RNA polymerase I (Pol I), RNA polymerase II (Pol II) and RNA polymerase III (Pol III) complexes consisting of at least 13, 12 and 17 subunits, respectively. Directly interacts with POLR2A.

Its subcellular location is the nucleus. The protein localises to the nucleolus. In terms of biological role, DNA-dependent RNA polymerase catalyzes the transcription of DNA into RNA using the four ribonucleoside triphosphates as substrates. Common component of RNA polymerases I, II and III which synthesize ribosomal RNA precursors, mRNA precursors and many functional non-coding RNAs, and small RNAs, such as 5S rRNA and tRNAs, respectively. In Dictyostelium discoideum (Social amoeba), this protein is DNA-directed RNA polymerases I, II, and III subunit rpabc3 (polr2h).